An 88-amino-acid chain; its full sequence is uncharacterized protein (88 aa).

Helical transmembrane passes span 27–46 (LFIF…ETPH) and 61–83 (SMCL…LILI).

It is found in the membrane. This is an uncharacterized protein from Saccharomyces cerevisiae (strain ATCC 204508 / S288c) (Baker's yeast).